Here is a 586-residue protein sequence, read N- to C-terminus: Mitogen-activated protein kinase 15 (586 aa).

The Protein kinase domain maps to 14 to 305 (YDIKKRLGKG…AEEALEHPYV (292 aa)). ATP is bound by residues 20–28 (LGKGAYGIV) and K43. D138 (proton acceptor) is an active-site residue. 2 disordered regions span residues 354 to 506 (QKRE…DAPP) and 520 to 539 (NQRTAPIQGRDPRSAPRFGR). Over residues 382–393 (PAPPAGTNPAPQ) the composition is skewed to pro residues. Residues 400-414 (PQRAAIAAPNQPPAQ) are compositionally biased toward low complexity. Polar residues predominate over residues 415–439 (KDSTQQSPKIKAPSSNPITHSTTHG). The segment covering 452 to 463 (AGQQGAAGTTAQ) has biased composition (low complexity). A compositionally biased stretch (basic and acidic residues) spans 464 to 473 (EVRKEVESRS). Residues 484–498 (FSHSQQARAAATNSA) are compositionally biased toward polar residues.

In terms of assembly, interacts with dvl2.

The protein localises to the cytoplasm. The protein resides in the cytoskeleton. Its subcellular location is the cilium basal body. It is found in the cell projection. It localises to the cilium. The protein localises to the cell junction. It catalyses the reaction L-seryl-[protein] + ATP = O-phospho-L-seryl-[protein] + ADP + H(+). It carries out the reaction L-threonyl-[protein] + ATP = O-phospho-L-threonyl-[protein] + ADP + H(+). Functionally, atypical MAPK protein that regulates ciliogenesis by phosphorylating rcsd1 through its binding with dvl2. In Xenopus laevis (African clawed frog), this protein is Mitogen-activated protein kinase 15.